The sequence spans 128 residues: MLNKLFGRVVSGKGEGKHYMSLPPYKEKFKNILGFEPYEGTLNVKLGYIINLNELNPIEVDDFYYKNNKYYGVKLIPVRICIKDYCVNGAIVYPKKTEHPNNVIELIAPIKLRKYLSLKNNYMVKIRL.

12-17 (GKGEGK) is a binding site for CDP. Positions 41 and 43 each coordinate Mg(2+). FMN is bound by residues T97 and E105. 110–113 (IKLR) lines the CDP pocket.

The protein belongs to the archaeal riboflavin kinase family. Mg(2+) serves as cofactor.

The enzyme catalyses riboflavin + CTP = CDP + FMN + H(+). It participates in cofactor biosynthesis; FMN biosynthesis; FMN from riboflavin (CTP route): step 1/1. Functionally, catalyzes the CTP-dependent phosphorylation of riboflavin (vitamin B2) to form flavin mononucleotide (FMN). The polypeptide is Riboflavin kinase (Methanococcus aeolicus (strain ATCC BAA-1280 / DSM 17508 / OCM 812 / Nankai-3)).